A 91-amino-acid polypeptide reads, in one-letter code: uncharacterized protein (91 aa).

A helical membrane pass occupies residues 50 to 70 (FGFFGGPFIGGLAGGLIGSAL).

The protein localises to the cell membrane. This is an uncharacterized protein from Bacillus subtilis (strain 168).